We begin with the raw amino-acid sequence, 102 residues long: Membrane-bound protein LytA (102 aa).

Residues 1-16 form the signal peptide; it reads MKKFIALLFFILLLSG. Cys17 carries N-palmitoyl cysteine lipidation. Cys17 carries S-diacylglycerol cysteine lipidation.

The protein resides in the cell membrane. In terms of biological role, possible role in the secretion of LytB and LytC. The polypeptide is Membrane-bound protein LytA (lytA) (Bacillus subtilis (strain 168)).